A 295-amino-acid polypeptide reads, in one-letter code: MRNTSKELQGATHRYAPCDWYYHVPVKRSEKAVDAPPASQIPGLSNLGDSHSENLPGTRRYWIKETDSEYVKLAKQGGRPDLLKHFAPGTRKGSPVAYSLPDWYIHHSKPPTASQQEVRAVSMPDYMVHEEFNPDQANGSYASRRGPFDFDMKTVWQREAEELEKEKKKLRLPAIDSKYLSKAGTPLGPKNPAGSRLSFPPVPGQKNSSPTNFSKLISNGYKDEWLQQQQRADSDKRTPKTSRASVLSQSPRDLEGPQDAARLQDAEASEGPEDTPESSQSPEESVSASTPAELK.

2 disordered regions span residues 33-52 (VDAP…DSHS) and 180-295 (LSKA…AELK). S50 is subject to Phosphoserine. Composition is skewed to polar residues over residues 205-217 (QKNS…SKLI) and 241-251 (TSRASVLSQSP). Residues 267 to 276 (EASEGPEDTP) are compositionally biased toward acidic residues. Residues 277–289 (ESSQSPEESVSAS) are compositionally biased toward low complexity.

This is an uncharacterized protein from Homo sapiens (Human).